A 287-amino-acid chain; its full sequence is Pol-RFamide neuropeptides (287 aa).

The N-terminal stretch at Met1–Ala21 is a signal peptide. The propeptide occupies Asp22–Asp52. At Gln53 the chain carries Pyrrolidone carboxylic acid. Phe59 carries the post-translational modification Phenylalanine amide. A propeptide spanning residues Glu62–Asn64 is cleaved from the precursor. Gln65 bears the Pyrrolidone carboxylic acid mark. Phe71 is subject to Phenylalanine amide. A propeptide spanning residues Glu74 to Asp77 is cleaved from the precursor. Gln78 is modified (pyrrolidone carboxylic acid). Position 84 is a phenylalanine amide (Phe84). Residues Glu87 to Asp90 constitute a propeptide that is removed on maturation. A Pyrrolidone carboxylic acid modification is found at Gln91. Phe97 carries the post-translational modification Phenylalanine amide. A propeptide spanning residues Glu100–Asp103 is cleaved from the precursor. Position 104 is a pyrrolidone carboxylic acid (Gln104). Phe110 is modified (phenylalanine amide). Positions Asp113–Asn116 are excised as a propeptide. Gln117 carries the pyrrolidone carboxylic acid modification. Residue Phe123 is modified to Phenylalanine amide. The propeptide occupies Glu126–Asp129. Pyrrolidone carboxylic acid is present on Gln130. Phe136 bears the Phenylalanine amide mark. The propeptide occupies Glu139–Asn142. At Gln143 the chain carries Pyrrolidone carboxylic acid. Phenylalanine amide is present on Phe149. The propeptide occupies Glu152 to Asp168. At Gln169 the chain carries Pyrrolidone carboxylic acid. Phenylalanine amide is present on Phe175. The propeptide occupies Glu178–Lys181. The residue at position 182 (Gln182) is a Pyrrolidone carboxylic acid. Phe188 carries the post-translational modification Phenylalanine amide. Residues Asp192–Asn194 constitute a propeptide that is removed on maturation. Pyrrolidone carboxylic acid is present on Gln195. Histidine amide is present on His201. A propeptide spanning residues Glu204–Asp207 is cleaved from the precursor. Gln208 is modified (pyrrolidone carboxylic acid). Phe214 carries the phenylalanine amide modification. Positions Gln217 to Asp220 are excised as a propeptide. At Gln221 the chain carries Pyrrolidone carboxylic acid. Position 227 is a phenylalanine amide (Phe227). The interval Arg229 to Lys267 is disordered. Residues Glu230–Val287 constitute a propeptide that is removed on maturation. The span at Pro238–Pro257 shows a compositional bias: polar residues.

It belongs to the FARP (FMRFamide related peptide) family. Post-translationally, the N-terminal processing sites of the Pol-RFamide peptides are acidic suggesting that cniderian nervous systems may use a variety of unconventional processing procedures.

Its subcellular location is the secreted. Has direct action on motoneurons, and effect includes transient inhibition followed by prolonged excitation. The protein is Pol-RFamide neuropeptides of Polyorchis penicillatus (Hydromedusa).